We begin with the raw amino-acid sequence, 31 residues long: GSCLELGEYCNGSKDDCQCCRDNAYCGCDIF.

In terms of tissue distribution, expressed by the venom gland.

Its subcellular location is the secreted. Not toxic to mice by intracerebroventricular injection. This Ctenus ornatus (Brazilian spider) protein is U14-ctenitoxin-Co1c.